Consider the following 159-residue polypeptide: Transcription elongation factor GreA (159 aa).

Residues 14 to 76 (IKKLENELEY…QLENMLKNAS (63 aa)) are a coiled coil.

This sequence belongs to the GreA/GreB family.

Necessary for efficient RNA polymerase transcription elongation past template-encoded arresting sites. The arresting sites in DNA have the property of trapping a certain fraction of elongating RNA polymerases that pass through, resulting in locked ternary complexes. Cleavage of the nascent transcript by cleavage factors such as GreA or GreB allows the resumption of elongation from the new 3'terminus. GreA releases sequences of 2 to 3 nucleotides. The chain is Transcription elongation factor GreA from Clostridium kluyveri (strain NBRC 12016).